The chain runs to 275 residues: 4-hydroxy-3-methylbut-2-enyl diphosphate reductase (275 aa).

Cysteine 12 lines the [4Fe-4S] cluster pocket. Histidine 36 and histidine 70 together coordinate (2E)-4-hydroxy-3-methylbut-2-enyl diphosphate. 2 residues coordinate dimethylallyl diphosphate: histidine 36 and histidine 70. 2 residues coordinate isopentenyl diphosphate: histidine 36 and histidine 70. Cysteine 92 contacts [4Fe-4S] cluster. Position 120 (histidine 120) interacts with (2E)-4-hydroxy-3-methylbut-2-enyl diphosphate. Histidine 120 contributes to the dimethylallyl diphosphate binding site. An isopentenyl diphosphate-binding site is contributed by histidine 120. Glutamate 122 (proton donor) is an active-site residue. Threonine 158 lines the (2E)-4-hydroxy-3-methylbut-2-enyl diphosphate pocket. Cysteine 186 is a [4Fe-4S] cluster binding site. (2E)-4-hydroxy-3-methylbut-2-enyl diphosphate is bound by residues serine 214, serine 215, asparagine 216, and serine 258. Dimethylallyl diphosphate contacts are provided by serine 214, serine 215, asparagine 216, and serine 258. Serine 214, serine 215, asparagine 216, and serine 258 together coordinate isopentenyl diphosphate.

This sequence belongs to the IspH family. It depends on [4Fe-4S] cluster as a cofactor.

It catalyses the reaction isopentenyl diphosphate + 2 oxidized [2Fe-2S]-[ferredoxin] + H2O = (2E)-4-hydroxy-3-methylbut-2-enyl diphosphate + 2 reduced [2Fe-2S]-[ferredoxin] + 2 H(+). The enzyme catalyses dimethylallyl diphosphate + 2 oxidized [2Fe-2S]-[ferredoxin] + H2O = (2E)-4-hydroxy-3-methylbut-2-enyl diphosphate + 2 reduced [2Fe-2S]-[ferredoxin] + 2 H(+). Its pathway is isoprenoid biosynthesis; dimethylallyl diphosphate biosynthesis; dimethylallyl diphosphate from (2E)-4-hydroxy-3-methylbutenyl diphosphate: step 1/1. The protein operates within isoprenoid biosynthesis; isopentenyl diphosphate biosynthesis via DXP pathway; isopentenyl diphosphate from 1-deoxy-D-xylulose 5-phosphate: step 6/6. Functionally, catalyzes the conversion of 1-hydroxy-2-methyl-2-(E)-butenyl 4-diphosphate (HMBPP) into a mixture of isopentenyl diphosphate (IPP) and dimethylallyl diphosphate (DMAPP). Acts in the terminal step of the DOXP/MEP pathway for isoprenoid precursor biosynthesis. The chain is 4-hydroxy-3-methylbut-2-enyl diphosphate reductase from Sulfurimonas denitrificans (strain ATCC 33889 / DSM 1251) (Thiomicrospira denitrificans (strain ATCC 33889 / DSM 1251)).